The chain runs to 220 residues: Deoxyribose-phosphate aldolase (220 aa).

D92 (proton donor/acceptor) is an active-site residue. K155 functions as the Schiff-base intermediate with acetaldehyde in the catalytic mechanism. The active-site Proton donor/acceptor is the K184.

Belongs to the DeoC/FbaB aldolase family. DeoC type 1 subfamily.

Its subcellular location is the cytoplasm. The catalysed reaction is 2-deoxy-D-ribose 5-phosphate = D-glyceraldehyde 3-phosphate + acetaldehyde. It participates in carbohydrate degradation; 2-deoxy-D-ribose 1-phosphate degradation; D-glyceraldehyde 3-phosphate and acetaldehyde from 2-deoxy-alpha-D-ribose 1-phosphate: step 2/2. Functionally, catalyzes a reversible aldol reaction between acetaldehyde and D-glyceraldehyde 3-phosphate to generate 2-deoxy-D-ribose 5-phosphate. The protein is Deoxyribose-phosphate aldolase of Symbiobacterium thermophilum (strain DSM 24528 / JCM 14929 / IAM 14863 / T).